The sequence spans 322 residues: Elongation factor P--(R)-beta-lysine ligase (322 aa).

Residue 72-74 (SPE) participates in substrate binding. Residues 96–98 (RNN) and Asn-106 each bind ATP. Tyr-115 contributes to the substrate binding site. 241–242 (EL) contacts ATP. Substrate is bound at residue Glu-248. Gly-297 provides a ligand contact to ATP.

Belongs to the class-II aminoacyl-tRNA synthetase family. EpmA subfamily. Homodimer.

The enzyme catalyses D-beta-lysine + L-lysyl-[protein] + ATP = N(6)-((3R)-3,6-diaminohexanoyl)-L-lysyl-[protein] + AMP + diphosphate + H(+). In terms of biological role, with EpmB is involved in the beta-lysylation step of the post-translational modification of translation elongation factor P (EF-P). Catalyzes the ATP-dependent activation of (R)-beta-lysine produced by EpmB, forming a lysyl-adenylate, from which the beta-lysyl moiety is then transferred to the epsilon-amino group of a conserved specific lysine residue in EF-P. The polypeptide is Elongation factor P--(R)-beta-lysine ligase (Buchnera aphidicola subsp. Baizongia pistaciae (strain Bp)).